The primary structure comprises 230 residues: tRNA (guanine-N(1)-)-methyltransferase (230 aa).

Residues G114 and 138–143 (IGDYVL) each bind S-adenosyl-L-methionine.

The protein belongs to the RNA methyltransferase TrmD family. As to quaternary structure, homodimer.

It is found in the cytoplasm. The enzyme catalyses guanosine(37) in tRNA + S-adenosyl-L-methionine = N(1)-methylguanosine(37) in tRNA + S-adenosyl-L-homocysteine + H(+). In terms of biological role, specifically methylates guanosine-37 in various tRNAs. In Rhodococcus jostii (strain RHA1), this protein is tRNA (guanine-N(1)-)-methyltransferase.